The chain runs to 378 residues: Succinate--CoA ligase [GDP-forming] subunit beta (378 aa).

An ATP-grasp domain is found at lysine 9 to glutamate 235. Residues lysine 45, glycine 52–glycine 54, valine 94, and glutamate 99 each bind GTP. Positions 190 and 204 each coordinate Mg(2+). Residues asparagine 255 and glycine 312 to threonine 314 each bind substrate.

This sequence belongs to the succinate/malate CoA ligase beta subunit family. As to quaternary structure, heterotetramer of two alpha and two beta subunits. Mg(2+) serves as cofactor.

It carries out the reaction GTP + succinate + CoA = succinyl-CoA + GDP + phosphate. The enzyme catalyses succinate + ATP + CoA = succinyl-CoA + ADP + phosphate. It functions in the pathway carbohydrate metabolism; tricarboxylic acid cycle; succinate from succinyl-CoA (ligase route): step 1/1. Its function is as follows. Succinyl-CoA synthetase functions in the citric acid cycle (TCA), coupling the hydrolysis of succinyl-CoA to the synthesis of either ATP or GTP and thus represents the only step of substrate-level phosphorylation in the TCA. The beta subunit provides nucleotide specificity of the enzyme and binds the substrate succinate, while the binding sites for coenzyme A and phosphate are found in the alpha subunit. Can use either ATP or GTP, but prefers GTP. This is Succinate--CoA ligase [GDP-forming] subunit beta from Thermus thermophilus.